The following is a 268-amino-acid chain: ClpXP adapter protein SpxH (268 aa).

Belongs to the SpxH family. Interacts with Spx.

Its subcellular location is the cytoplasm. Adapter protein required for efficient degradation of Spx by ClpXP under non-stress conditions. Interaction with Spx stabilizes Spx and exposes the C-terminus of Spx for recognition and proteolysis by ClpXP. The polypeptide is ClpXP adapter protein SpxH (Staphylococcus aureus (strain MRSA252)).